Here is a 169-residue protein sequence, read N- to C-terminus: Der GTPase-activating protein YihI (169 aa).

2 disordered regions span residues 1–98 (MKPS…PQAE) and 144–169 (GLSY…LRGN). A compositionally biased stretch (basic residues) spans 10-19 (SKGHAKARRK). Basic and acidic residues predominate over residues 20–30 (TREELDQEARD). Over residues 31–40 (RKRLKKRRGH) the composition is skewed to basic residues. Positions 49 to 58 (GNTTSGSKGQ) are enriched in polar residues. The span at 147–159 (YDDDEEEEEDEKQ) shows a compositional bias: acidic residues. Residues 160–169 (EDMMRLLRGN) show a composition bias toward basic and acidic residues.

Belongs to the YihI family. As to quaternary structure, interacts with Der.

Functionally, a GTPase-activating protein (GAP) that modifies Der/EngA GTPase function. May play a role in ribosome biogenesis. The chain is Der GTPase-activating protein YihI from Escherichia coli O6:K15:H31 (strain 536 / UPEC).